Consider the following 2763-residue polypeptide: Large tegument protein deneddylase (2763 aa).

Residues 1–247 (MDIIPPIAVT…CDTYFTDEQY (247 aa)) form a deubiquitination activity region. The 226-residue stretch at 12-237 (AGVGSRNQFD…SSAVTLIYGS (226 aa)) folds into the Peptidase C76 domain. Catalysis depends on residues C32, D168, and H170. Residues 495–523 (LELFINLTILRLTGFVVENGTRTHHGATS) form an interaction with inner tegument protein region. The disordered stretch occupies residues 2456-2476 (VRPAQPAQPAQPAQPAQTVQP). 5 repeat units span residues 2458-2460 (PAQ), 2461-2463 (PAQ), 2464-2466 (PAQ), 2467-2469 (PAQ), and 2470-2472 (PAQ). Positions 2458-2472 (PAQPAQPAQPAQPAQ) are 5 X 3 AA repeats of P-A-Q. Residues 2459–2476 (AQPAQPAQPAQPAQTVQP) show a composition bias toward low complexity.

It belongs to the herpesviridae large tegument protein family. In terms of assembly, interacts with host CUL1 and CUL4A; these interactions inhibit the E3 ligase activity of cullins. Interacts with inner tegument protein. Interacts with capsid vertex specific component CVC2. Interacts with the major capsid protein/MCP.

It localises to the virion tegument. The protein resides in the host cytoplasm. It is found in the host nucleus. It carries out the reaction Thiol-dependent hydrolysis of ester, thioester, amide, peptide and isopeptide bonds formed by the C-terminal Gly of ubiquitin (a 76-residue protein attached to proteins as an intracellular targeting signal).. Functionally, large tegument protein that plays multiple roles in the viral cycle. During viral entry, remains associated with the capsid while most of the tegument is detached and participates in the capsid transport toward the host nucleus. Plays a role in the routing of the capsid at the nuclear pore complex and subsequent uncoating. Within the host nucleus, acts as a deneddylase and promotes the degradation of nuclear CRLs (cullin-RING ubiquitin ligases) and thereby stabilizes nuclear CRL substrates, while cytoplasmic CRLs remain unaffected. These modifications prevent host cell cycle S-phase progression and create a favorable environment allowing efficient viral genome replication. Participates later in the secondary envelopment of capsids. Indeed, plays a linker role for the association of the outer viral tegument to the capsids together with the inner tegument protein. In Homo sapiens (Human), this protein is Large tegument protein deneddylase.